A 519-amino-acid polypeptide reads, in one-letter code: MYIPGPLRLSSYLLPFLSSPSPPAQSSPDTRTISFKPVHAHGHAFVDNASTPTLLFLDQSPSASLYAHDYPIGAFGDDYMLPRLTSDVLEIRTRKKLIRRPKVRPPRIISWAQSYRAQALHFNGINNNNDNSNKSISLPESWLAPDLANPSDEWSDVEVTVPDLTDRQTVITLAKMSSNAYVTPGGAGWYTLNDWNASMPFGWEPDADGLRGHVFADEKNETVIISIKGTSAGVLGSGGPTAKNDKFNDNLLFSCCCARVDFSWTPVCDCYAGGYKCGQTCLEDALVSESVYATVGTNLYNNITYMYPNATIWLTGHSLGGAVSSLIGLSFGAPAVTYESPGELLPASRLHLPLPPGMPANLSGITHVYHTADPIAMGVCNGPYSSCYAAGFAMESKCHTGETILYDTVRVKGWSVDVRTHRIEEVIDKVLADPWPEEEEGKSGVWEKAVEGWYRAADRVRAALDESVVRDDVNVWWGWGRRGPKRQPGGEDPKHGGVPKPVSEEDCVDCYKWEFGEWN.

Topologically, residues M1–G5 are cytoplasmic. Residues P6–S26 form a helical; Signal-anchor for type II membrane protein membrane-spanning segment. The Lumenal segment spans residues S27–N519. N48, N133, N196, N220, N302, and N309 each carry an N-linked (GlcNAc...) asparagine glycan. The active-site Charge relay system is the S318. N361 carries N-linked (GlcNAc...) asparagine glycosylation. The disordered stretch occupies residues R481–V502.

It belongs to the AB hydrolase superfamily. Lipase family. As to quaternary structure, binds to both phosphatidylinositol (PI) and phosphatidylinositol 3,5-bisphosphate (PIP2).

The protein localises to the endosome. It is found in the multivesicular body membrane. It localises to the prevacuolar compartment membrane. The enzyme catalyses a triacylglycerol + H2O = a diacylglycerol + a fatty acid + H(+). Its function is as follows. Lipase which is essential for lysis of subvacuolar cytoplasm to vacuole targeted bodies and intravacuolar autophagic bodies. Involved in the lysis of intravacuolar multivesicular body (MVB) vesicles. The intravacuolar membrane disintegration by ATG15 is critical to life span extension. This chain is Putative lipase ATG15 (ATG15), found in Cryptococcus neoformans var. neoformans serotype D (strain B-3501A) (Filobasidiella neoformans).